Reading from the N-terminus, the 213-residue chain is Phosphatidylethanolamine N-methyltransferase A (213 aa).

At 1–21 the chain is on the lumenal side; it reads MIVEHAIDYIDYLMNYVDFTE. Positions 22–42 form an intramembrane region, helical; it reads KYFLLTIACVVFNPTWWNITA. Residues 43–54 are Lumenal-facing; the sequence is RMEYKTKFMTKI. Residues 55–75 traverse the membrane as a helical segment; it reads CGSKENGCYLLAFLIFSLGIL. Residues 76 to 102 lie on the Cytoplasmic side of the membrane; that stretch reads RDWLFSEALIRQPIFQEFDRFEVEVLS. The helical transmembrane segment at 103–123 threads the bilayer; that stretch reads YILYGFGGILVLAAYLKLGIT. 107-109 lines the S-adenosyl-L-methionine pocket; that stretch reads GFG. At 124-166 the chain is on the lumenal side; that stretch reads GTYLGDYFGILMKERVTGFPFNVMNNPMYNGSVMLFIAHALSY. Residues 167-187 form a helical membrane-spanning segment; sequence KSVAGLVLSFVVYVVYKFALI. The Cytoplasmic segment spans residues 188-213; the sequence is FEESFTNYIYSTAAANAAKKNKSKSK. 189–190 is an S-adenosyl-L-methionine binding site; sequence EE.

The protein belongs to the class VI-like SAM-binding methyltransferase superfamily. PEMT/PEM2 methyltransferase family.

It localises to the endoplasmic reticulum membrane. Its subcellular location is the mitochondrion membrane. The enzyme catalyses a 1,2-diacyl-sn-glycero-3-phospho-N-methylethanolamine + S-adenosyl-L-methionine = a 1,2-diacyl-sn-glycero-3-phospho-N,N-dimethylethanolamine + S-adenosyl-L-homocysteine + H(+). It catalyses the reaction a 1,2-diacyl-sn-glycero-3-phospho-N,N-dimethylethanolamine + S-adenosyl-L-methionine = a 1,2-diacyl-sn-glycero-3-phosphocholine + S-adenosyl-L-homocysteine + H(+). The catalysed reaction is a 1,2-diacyl-sn-glycero-3-phosphoethanolamine + S-adenosyl-L-methionine = a 1,2-diacyl-sn-glycero-3-phospho-N-methylethanolamine + S-adenosyl-L-homocysteine + H(+). The protein operates within phospholipid metabolism; phosphatidylcholine biosynthesis. Functionally, catalyzes the three sequential steps of the methylation pathway of phosphatidylcholine biosynthesis, the SAM-dependent methylation of phosphatidylethanolamine (PE) to phosphatidylmonomethylethanolamine (PMME), PMME to phosphatidyldimethylethanolamine (PDME), and PDME to phosphatidylcholine (PC). The sequence is that of Phosphatidylethanolamine N-methyltransferase A (pemtA) from Dictyostelium discoideum (Social amoeba).